The sequence spans 129 residues: Large ribosomal subunit protein bL17 (129 aa).

The protein belongs to the bacterial ribosomal protein bL17 family. In terms of assembly, part of the 50S ribosomal subunit. Contacts protein L32.

The sequence is that of Large ribosomal subunit protein bL17 from Desulfotalea psychrophila (strain LSv54 / DSM 12343).